The following is a 175-amino-acid chain: Large ribosomal subunit protein uL10 (175 aa).

This sequence belongs to the universal ribosomal protein uL10 family. Part of the ribosomal stalk of the 50S ribosomal subunit. The N-terminus interacts with L11 and the large rRNA to form the base of the stalk. The C-terminus forms an elongated spine to which L12 dimers bind in a sequential fashion forming a multimeric L10(L12)X complex.

Its function is as follows. Forms part of the ribosomal stalk, playing a central role in the interaction of the ribosome with GTP-bound translation factors. The protein is Large ribosomal subunit protein uL10 of Synechococcus sp. (strain CC9311).